Consider the following 396-residue polypeptide: MIISAASDYRAAAQRILPPFLFHYMDGGAYSEYTLRRNVEDLSEVALRQRILKNMSDLSLETTLFNEKLSMPVALAPVGLCGMYARRGEVQAAKAADTHGIPFTLSTVSVCPIEEVAPAIKRPMWFQLYVLRDRGFMRNALERAKAAGCSTLVFTVDMPTPGARYRDAHSGMSGPNAAMRRYLQAVTHPQWAWDVGLNGRPHDLGNISAYLGKPTGLEDYIGWLGNNFDPSISWKDLEWIRDFWDGPMVIKGILDPEDARDAVRFGADGIVVSNHGGRQLDGVLSSARALPAIADAVKGDIAILADSGIRNGLDVVRMIALGADTVLLGRAFLYALATAGQAGVANLLNLIEKEMKVAMTLTGAKSISEITQDSLVQGLGKELPAALAPMAKGNAA.

The FMN hydroxy acid dehydrogenase domain maps to 1 to 380 (MIISAASDYR…TQDSLVQGLG (380 aa)). Tyrosine 24 contacts substrate. Serine 106 and glutamine 127 together coordinate FMN. Substrate is bound at residue tyrosine 129. Threonine 155 provides a ligand contact to FMN. Position 164 (arginine 164) interacts with substrate. FMN is bound at residue lysine 251. Histidine 275 acts as the Proton acceptor in catalysis. Arginine 278 lines the substrate pocket. 306 to 330 (DSGIRNGLDVVRMIALGADTVLLGR) is a binding site for FMN.

This sequence belongs to the FMN-dependent alpha-hydroxy acid dehydrogenase family. It depends on FMN as a cofactor.

Its subcellular location is the cell inner membrane. It carries out the reaction (S)-lactate + A = pyruvate + AH2. Its function is as follows. Catalyzes the conversion of L-lactate to pyruvate. Is coupled to the respiratory chain. The polypeptide is L-lactate dehydrogenase (Shigella boydii serotype 4 (strain Sb227)).